Reading from the N-terminus, the 318-residue chain is MIPEKKSIAIMKELSIGNTKQMLMINGVDVKNPLLLFLHGGPGTPQIGYVRHYQKELEQYFTVVHWDQRGSGLSYSKRISHHSMTINHFIKDTIQVTQWLLAHFSKSKLYLAGHSWGSILALHVLQQRPDLFYTYYGISQVVNPQDEESTAYQHIREISESKKASILSFLTRFIGAPPWKQDIQHLIYRFCVELTRGGFTHRHRQSLAVLFQMLTGNEYGVRNMHSFLNGLRFSKKHLTDELYRFNAFTSVPSIKVPCVFISGKHDLIVPAEISKQYYQELEAPEKRWFQFENSAHTPHIEEPSLFANTLSRHARHHL.

The active-site Nucleophile is the serine 115. Aspartate 266 is a catalytic residue. The active-site Proton donor is the histidine 296.

The protein belongs to the peptidase S33 family.

In terms of biological role, probable aminopeptidase. The polypeptide is Probable aminopeptidase YbaC (ybaC) (Bacillus subtilis (strain 168)).